Here is a 246-residue protein sequence, read N- to C-terminus: MAEFSADLCLFDLDGTIVSTTVAAEKAWTKLCYEYGVDPSELFKHSHGARTQEVLRRFFPKLDDTDNKGVLALEKDIAHSYLDTVSLIPGAENLLLSLDVDTETQKKLPERKWAIVTSGSPYLAFSWFETILKNVGKPKVFITGFDVKNGKPDPEGYSRARDLLRQDLQLTGKQDLKYVVFEDAPVGIKAGKAMGAITVGITSSYDKSVLFDAGADYVVCDLTQVSVVKNNENGIVIQVNNPLTRA.

Catalysis depends on D83, which acts as the Nucleophile. D83 lines the Mg(2+) pocket. Residues D83, E92, and 146-149 (DVKN) contribute to the substrate site. D183 is a Mg(2+) binding site.

The protein belongs to the HAD-like hydrolase superfamily. DOG/GPP family. It depends on Mg(2+) as a cofactor.

It carries out the reaction 2-deoxy-D-glucose 6-phosphate + H2O = 2-deoxy-D-glucose + phosphate. Functionally, phosphatase that is active on 2-deoxy-D-glucose 6-phosphate (2-DOG-6P), as well as on fructose-1-P. The polypeptide is 2-deoxyglucose-6-phosphate phosphatase 1 (Saccharomyces cerevisiae (strain ATCC 204508 / S288c) (Baker's yeast)).